Consider the following 381-residue polypeptide: MGCLGNSSKTAEDQGVDEKERREANKKIEKQLQKERLAYKATHRLLLLGAGESGKSTIVKQMRILHVNGSNPEEKKQKILDIRKNVKDAIVTIVSAMSTIIPPVPLANPENQFRSDYIKSIAPITDFEYSQEFFDHVKKLWDDEGVKACFERSNEYQLIDCAQYFLERIDSVSLVDYTPTDQDLLRCRVLTSGIFETRFQVDKVNFHMFDVGGQRDERRKWIQCFNDVTAIIYVAACSSYNMVIREDNNTNRLRESLDLFESIWNNRWLRTISIILFLNKQDMLAEKVLAGKSKIEDYFPEYANYTVPEDATPDAGEDPKVTRAKFFIRDLFLRISTATGDGKHYCYPHFTCAVDTENIRRVFNDCRDIIQRMHLKQYELL.

Residues 1–25 (MGCLGNSSKTAEDQGVDEKERREAN) form a disordered region. Glycine 2 is lipidated: N-palmitoyl glycine. Cysteine 3 is lipidated: S-palmitoyl cysteine. Residues 10–25 (TAEDQGVDEKERREAN) show a composition bias toward basic and acidic residues. The G-alpha domain maps to 41–381 (ATHRLLLLGA…RMHLKQYELL (341 aa)). The interval 44–57 (RLLLLGAGESGKST) is G1 motif. GTP-binding residues include glutamate 52, serine 53, glycine 54, lysine 55, serine 56, and threonine 57. A Mg(2+)-binding site is contributed by serine 56. Threonine 178 is subject to Phosphothreonine. The G2 motif stretch occupies residues 183–191 (DLLRCRVLT). The GTP site is built by leucine 185, arginine 186, and threonine 191. Mg(2+) is bound by residues threonine 191 and aspartate 210. A G3 motif region spans residues 206–215 (FHMFDVGGQR). GTP is bound by residues glycine 213, asparagine 279, lysine 280, aspartate 282, and alanine 353. The G4 motif stretch occupies residues 275–282 (ILFLNKQD). Residues 351–356 (TCAVDT) form a G5 motif region.

Belongs to the G-alpha family. G(s) subfamily. G proteins are composed of 3 units; alpha, beta and gamma. The alpha chain contains the guanine nucleotide binding site. Interacts with GAS2L2. Interacts (GDP-bound form) with RIC8B (via C-terminus); promoting GNAL folding and association with the plasma membrane.

The protein resides in the cell membrane. It catalyses the reaction GTP + H2O = GDP + phosphate + H(+). Functionally, guanine nucleotide-binding protein (G protein) involved as transducer in olfactory signal transduction controlled by G protein-coupled receptors (GPCRs). Contains the guanine nucleotide binding site and alternates between an active, GTP-bound state and an inactive, GDP-bound state. Signaling by an activated GPCR promotes GDP release and GTP binding. The alpha subunit has a low GTPase activity that converts bound GTP to GDP, thereby terminating the signal. Both GDP release and GTP hydrolysis are modulated by numerous regulatory proteins. GNAL/G(olf) alpha specifically mediates olfactory signal transduction within the olfactory neuroepithelium and the basal ganglia following GPCRs activation. Acts by promoting the specific activation of adenylyl cyclase ADCY3, resulting in increased levels of the signaling molecule cAMP. This chain is Guanine nucleotide-binding protein G(olf) subunit alpha, found in Rattus norvegicus (Rat).